Consider the following 325-residue polypeptide: uncharacterized protein (325 aa).

Positions 49–151 (RYEHSIGVML…ELCADRTDYT (103 aa)) constitute an HD domain.

This is an uncharacterized protein from Bacillus subtilis (strain 168).